Consider the following 206-residue polypeptide: LexA repressor (206 aa).

The segment at residues 28 to 48 (RAEIATRLGFKSANAAEEHLK) is a DNA-binding region (H-T-H motif). Active-site for autocatalytic cleavage activity residues include S123 and K160.

This sequence belongs to the peptidase S24 family. As to quaternary structure, homodimer.

It catalyses the reaction Hydrolysis of Ala-|-Gly bond in repressor LexA.. Its function is as follows. Represses a number of genes involved in the response to DNA damage (SOS response), including recA and lexA. In the presence of single-stranded DNA, RecA interacts with LexA causing an autocatalytic cleavage which disrupts the DNA-binding part of LexA, leading to derepression of the SOS regulon and eventually DNA repair. In Shewanella oneidensis (strain ATCC 700550 / JCM 31522 / CIP 106686 / LMG 19005 / NCIMB 14063 / MR-1), this protein is LexA repressor.